Here is a 229-residue protein sequence, read N- to C-terminus: MSVLVITGTDTGVGKTVATAALACAARVAGIDVAVCKPVQTGTGPVGGTGDDDLVEIGRLAGVDALHPGWRYPDPLAPVAAAERAGAALPTRDELIGMVRAADAPGRLTLVEGAGGLLVELGQDAVTLRDVATELDAPVLVVVAPGLGTLNHTALTLESLAAQHVPCAGLVIGAWPAQPGAAEIDNRDTLARLAPVRAALPAGVGSVSPVDFERISATAFDPNWLAGLL.

12 to 17 contacts ATP; the sequence is GVGKTV. Thr-16 provides a ligand contact to Mg(2+). Lys-37 is an active-site residue. A substrate-binding site is contributed by Thr-41. Residues Asp-53, 112 to 115, and 201 to 203 contribute to the ATP site; these read EGAG and PAG. 2 residues coordinate Mg(2+): Asp-53 and Glu-112.

The protein belongs to the dethiobiotin synthetase family. In terms of assembly, homodimer. Mg(2+) serves as cofactor.

Its subcellular location is the cytoplasm. The enzyme catalyses (7R,8S)-7,8-diammoniononanoate + CO2 + ATP = (4R,5S)-dethiobiotin + ADP + phosphate + 3 H(+). It participates in cofactor biosynthesis; biotin biosynthesis; biotin from 7,8-diaminononanoate: step 1/2. Catalyzes a mechanistically unusual reaction, the ATP-dependent insertion of CO2 between the N7 and N8 nitrogen atoms of 7,8-diaminopelargonic acid (DAPA, also called 7,8-diammoniononanoate) to form a ureido ring. The polypeptide is ATP-dependent dethiobiotin synthetase BioD (Mycobacterium sp. (strain KMS)).